We begin with the raw amino-acid sequence, 1255 residues long: Pre-mRNA-splicing factor ATP-dependent RNA helicase DEAH7 (1255 aa).

Residues 1–316 (MGVDPFKTTE…SDEDRSQGAE (316 aa)) are disordered. Basic and acidic residues predominate over residues 13 to 60 (EADKETNGGVPVKDKLTFKAPERKSRLGLDARAIEKKDNAKTEGEFKV). Over residues 109–137 (AQESTVTTENAGTSDISITPRTLSCTSSY) the composition is skewed to polar residues. 2 short sequence motifs (nuclear localization signal) span residues 144-153 (RHREEHRRDR) and 172-191 (RRRE…KRRR). The span at 144-219 (RHREEHRRDR…EWERSPHGDR (76 aa)) shows a compositional bias: basic and acidic residues. 2 stretches are compositionally biased toward low complexity: residues 220–240 (GSSY…AASP) and 271–290 (PIRA…GGRS). The segment covering 297 to 316 (REGDLTNEGHSDEDRSQGAE) has biased composition (basic and acidic residues). The Helicase ATP-binding domain maps to 568-731 (LQVIRENQVI…FGSVPIFNIP (164 aa)). 581–588 (GETGSGKT) contributes to the ATP binding site. Residues 678–681 (DEAH) carry the DEAH box motif. One can recognise a Helicase C-terminal domain in the interval 753-933 (AVKQAMTIHI…NVVLLLKSLK (181 aa)). A compositionally biased stretch (basic and acidic residues) spans 1190 to 1224 (LEHKKKQKEEKSGMEEEMEKLRRDQVESELRSKER). Residues 1190–1255 (LEHKKKQKEE…TFLRPKKLGL (66 aa)) are disordered.

Belongs to the DEAD box helicase family. DEAH subfamily. PRP16 sub-subfamily. In terms of assembly, interacts with the Phytophthora PSR1 protein.

Its subcellular location is the nucleus. The catalysed reaction is ATP + H2O = ADP + phosphate + H(+). Involved in pre-mRNA splicing by mediating structural transitions of the spliceosome during the catalytic step. Facilitates expression of genes involved in auxin-mediated development including male-gametophyte transmission, apical-basal patterning of embryonic and gynoecium development, stamen development, phyllotactic flower positioning, and vascular development. Also involved in root-meristem maintenance and planar polarity of root-hair positioning. Acts as a component of RNA silencing that regulates distinct classes of endogenous small RNAs. Functions as a positive regulator of plant immunity. This is Pre-mRNA-splicing factor ATP-dependent RNA helicase DEAH7 from Arabidopsis thaliana (Mouse-ear cress).